A 398-amino-acid polypeptide reads, in one-letter code: Histidinol dehydrogenase (398 aa).

Positions 114, 176, and 199 each coordinate NAD(+). Positions 222, 244, and 247 each coordinate substrate. The Zn(2+) site is built by glutamine 244 and histidine 247. Active-site proton acceptor residues include glutamate 298 and histidine 299. Residues histidine 299, aspartate 331, glutamate 384, and histidine 389 each contribute to the substrate site. Aspartate 331 provides a ligand contact to Zn(2+). Histidine 389 contributes to the Zn(2+) binding site.

Belongs to the histidinol dehydrogenase family. Requires Zn(2+) as cofactor.

It catalyses the reaction L-histidinol + 2 NAD(+) + H2O = L-histidine + 2 NADH + 3 H(+). It functions in the pathway amino-acid biosynthesis; L-histidine biosynthesis; L-histidine from 5-phospho-alpha-D-ribose 1-diphosphate: step 9/9. In terms of biological role, catalyzes the sequential NAD-dependent oxidations of L-histidinol to L-histidinaldehyde and then to L-histidine. In Saccharolobus solfataricus (strain ATCC 35092 / DSM 1617 / JCM 11322 / P2) (Sulfolobus solfataricus), this protein is Histidinol dehydrogenase (hisD).